The chain runs to 547 residues: Chaperonin GroEL 1 (547 aa).

Residues 30 to 33 (TLGP), Lys51, 87 to 91 (DGTTT), Gly415, and Asp494 each bind ATP. The segment at 524-547 (PKGKAKGGGAGAGMPDYGGDDMDY) is disordered.

It belongs to the chaperonin (HSP60) family. Forms a cylinder of 14 subunits composed of two heptameric rings stacked back-to-back. Interacts with the co-chaperonin GroES.

The protein resides in the cytoplasm. The enzyme catalyses ATP + H2O + a folded polypeptide = ADP + phosphate + an unfolded polypeptide.. Together with its co-chaperonin GroES, plays an essential role in assisting protein folding. The GroEL-GroES system forms a nano-cage that allows encapsulation of the non-native substrate proteins and provides a physical environment optimized to promote and accelerate protein folding. This Myxococcus xanthus (strain DK1622) protein is Chaperonin GroEL 1.